The following is a 338-amino-acid chain: MTTTTTTTTNTNTTNLDPLLPWVEKYRPILIKDIVGNEETVSRLESISKDGNLPNIIISGPPGTGKTSSILCLARALLGANYKEAVYELNASDDRTLDVVRDKIKSFAMKKVTLPAGRHKIIILDEVDSMTSGAQQALRRIMEIYSGTTRFAFACNQSTKIIEPIQSRCAVLRFTRLSDSQILTRLREVVQIEKVPYTDDGLAAIIFTAEGDMRQALNNLQATHSGFGLINAENVTKVCDQPHPLIIKQIIALCAKSDFKEAYPFLKKLWDDGYSSIDIISALFSITKSSNNIPEYQKLEFLKEIGFCNLRATTGVNTLVQLTGLLSKLCLVSIKMKN.

60–67 (GPPGTGKT) is an ATP binding site.

Belongs to the activator 1 small subunits family. In terms of assembly, heteropentamer of various rfc subunits that forms a complex (RFC) with PCNA in the presence of ATP.

The protein resides in the nucleus. Functionally, the elongation of primed DNA templates by DNA polymerase delta and epsilon requires the action of the accessory proteins PCNA and activator 1. The chain is Probable replication factor C subunit 2 (rfc2) from Dictyostelium discoideum (Social amoeba).